The following is a 327-amino-acid chain: DNA-directed RNA polymerase subunit alpha (327 aa).

Residues 1–233 (MQNSASEFLK…DQLSIFADLQ (233 aa)) form an alpha N-terminal domain (alpha-NTD) region. The tract at residues 247–327 (IDPILLRPVD…NWPPAGLEKP (81 aa)) is alpha C-terminal domain (alpha-CTD).

This sequence belongs to the RNA polymerase alpha chain family. In terms of assembly, homodimer. The RNAP catalytic core consists of 2 alpha, 1 beta, 1 beta' and 1 omega subunit. When a sigma factor is associated with the core the holoenzyme is formed, which can initiate transcription.

The catalysed reaction is RNA(n) + a ribonucleoside 5'-triphosphate = RNA(n+1) + diphosphate. Functionally, DNA-dependent RNA polymerase catalyzes the transcription of DNA into RNA using the four ribonucleoside triphosphates as substrates. This chain is DNA-directed RNA polymerase subunit alpha, found in Chromobacterium violaceum (strain ATCC 12472 / DSM 30191 / JCM 1249 / CCUG 213 / NBRC 12614 / NCIMB 9131 / NCTC 9757 / MK).